We begin with the raw amino-acid sequence, 107 residues long: FK506-binding protein 1 (107 aa).

The PPIase FKBP-type domain maps to 19 to 107 (GSNVTVHHAG…VFEVELITFK (89 aa)).

The protein belongs to the FKBP-type PPIase family.

It catalyses the reaction [protein]-peptidylproline (omega=180) = [protein]-peptidylproline (omega=0). Its activity is regulated as follows. Inhibited by both FK506 and rapamycin. PPIases accelerate the folding of proteins by catalyzing the cis-trans isomerization of proline imidic peptide bonds in oligopeptides. This is FK506-binding protein 1 (fkbp1) from Dictyostelium discoideum (Social amoeba).